The chain runs to 338 residues: DNA-directed RNA polymerase subunit alpha (338 aa).

The alpha N-terminal domain (alpha-NTD) stretch occupies residues M1–D233. The interval I250 to L338 is alpha C-terminal domain (alpha-CTD).

The protein belongs to the RNA polymerase alpha chain family. In terms of assembly, homodimer. The RNAP catalytic core consists of 2 alpha, 1 beta, 1 beta' and 1 omega subunit. When a sigma factor is associated with the core the holoenzyme is formed, which can initiate transcription.

The enzyme catalyses RNA(n) + a ribonucleoside 5'-triphosphate = RNA(n+1) + diphosphate. Its function is as follows. DNA-dependent RNA polymerase catalyzes the transcription of DNA into RNA using the four ribonucleoside triphosphates as substrates. This is DNA-directed RNA polymerase subunit alpha from Syntrophotalea carbinolica (strain DSM 2380 / NBRC 103641 / GraBd1) (Pelobacter carbinolicus).